The following is a 387-amino-acid chain: Sulfoacetaldehyde reductase (387 aa).

The protein belongs to the iron-containing alcohol dehydrogenase family.

The catalysed reaction is 2-hydroxyethane-1-sulfonate + NAD(+) = sulfoacetaldehyde + NADH + H(+). It functions in the pathway organosulfur degradation; alkanesulfonate degradation. In terms of biological role, involved in an anaerobic respiration pathway that converts the sulfonate taurine (2-aminoethanesulfonate) to ammonia, acetate and sulfide. Catalyzes the NADH-dependent reduction of sulfoacetaldehyde to 2-hydroxyethane-1-sulfonate (isethionate). Does not accept acetaldehyde as a substrate. The sequence is that of Sulfoacetaldehyde reductase from Bilophila wadsworthia (strain 3_1_6).